Reading from the N-terminus, the 277-residue chain is 4-hydroxy-tetrahydrodipicolinate reductase (277 aa).

NAD(+)-binding positions include 11–16 and 110–112; these read GALGRM and GTT. Residue His-166 is the Proton donor/acceptor of the active site. His-167 lines the (S)-2,3,4,5-tetrahydrodipicolinate pocket. Lys-170 (proton donor) is an active-site residue. 176–177 contacts (S)-2,3,4,5-tetrahydrodipicolinate; that stretch reads GT.

The protein belongs to the DapB family.

The protein resides in the cytoplasm. It carries out the reaction (S)-2,3,4,5-tetrahydrodipicolinate + NAD(+) + H2O = (2S,4S)-4-hydroxy-2,3,4,5-tetrahydrodipicolinate + NADH + H(+). The catalysed reaction is (S)-2,3,4,5-tetrahydrodipicolinate + NADP(+) + H2O = (2S,4S)-4-hydroxy-2,3,4,5-tetrahydrodipicolinate + NADPH + H(+). Its pathway is amino-acid biosynthesis; L-lysine biosynthesis via DAP pathway; (S)-tetrahydrodipicolinate from L-aspartate: step 4/4. In terms of biological role, catalyzes the conversion of 4-hydroxy-tetrahydrodipicolinate (HTPA) to tetrahydrodipicolinate. This chain is 4-hydroxy-tetrahydrodipicolinate reductase, found in Parasynechococcus marenigrum (strain WH8102).